The sequence spans 67 residues: Large ribosomal subunit protein uL29 (67 aa).

It belongs to the universal ribosomal protein uL29 family.

In Methanothrix thermoacetophila (strain DSM 6194 / JCM 14653 / NBRC 101360 / PT) (Methanosaeta thermophila), this protein is Large ribosomal subunit protein uL29.